The primary structure comprises 101 residues: Large ribosomal subunit protein bL20 (101 aa).

The protein belongs to the bacterial ribosomal protein bL20 family.

Its function is as follows. Binds directly to 23S ribosomal RNA and is necessary for the in vitro assembly process of the 50S ribosomal subunit. It is not involved in the protein synthesizing functions of that subunit. This is Large ribosomal subunit protein bL20 (rplT) from Carsonella ruddii (strain PV).